We begin with the raw amino-acid sequence, 302 residues long: Nucleotide-binding protein RHOS4_02640 (302 aa).

15–22 contributes to the ATP binding site; the sequence is GPSGAGRT. Residue 62 to 65 participates in GTP binding; it reads DVRN.

It belongs to the RapZ-like family.

Functionally, displays ATPase and GTPase activities. This chain is Nucleotide-binding protein RHOS4_02640, found in Cereibacter sphaeroides (strain ATCC 17023 / DSM 158 / JCM 6121 / CCUG 31486 / LMG 2827 / NBRC 12203 / NCIMB 8253 / ATH 2.4.1.) (Rhodobacter sphaeroides).